The primary structure comprises 319 residues: Methionyl-tRNA formyltransferase (319 aa).

110-113 (SLLP) is a binding site for (6S)-5,6,7,8-tetrahydrofolate.

The protein belongs to the Fmt family.

The enzyme catalyses L-methionyl-tRNA(fMet) + (6R)-10-formyltetrahydrofolate = N-formyl-L-methionyl-tRNA(fMet) + (6S)-5,6,7,8-tetrahydrofolate + H(+). Attaches a formyl group to the free amino group of methionyl-tRNA(fMet). The formyl group appears to play a dual role in the initiator identity of N-formylmethionyl-tRNA by promoting its recognition by IF2 and preventing the misappropriation of this tRNA by the elongation apparatus. This Geobacillus thermodenitrificans (strain NG80-2) protein is Methionyl-tRNA formyltransferase.